A 736-amino-acid chain; its full sequence is Capsid protein (736 aa).

Residues 633–692 (ESDALTLSPVHRPKRPKRDTQVKEKTPEKDSDSAVQLRRLQPWIHSSQETKDEEEEIPEG) are disordered. Basic and acidic residues predominate over residues 650–664 (RDTQVKEKTPEKDSD).

It belongs to the anelloviridae capsid protein family.

Its subcellular location is the virion. Its function is as follows. Self assemble to form an icosahedral capsid. The sequence is that of Capsid protein from Torque teno virus (isolate Human/Finland/Hel32/2002) (TTV).